Here is a 310-residue protein sequence, read N- to C-terminus: NADH-cytochrome b5 reductase 1 (310 aa).

Residues 30-50 traverse the membrane as a helical segment; the sequence is WVPFAVALAAGFVAWKLSVGG. The region spanning 61-166 is the FAD-binding FR-type domain; it reads NEFQNFVLKE…RGPKGAMVYT (106 aa). FAD contacts are provided by residues 146 to 160 and 172 to 209; these read TTLKVGDTMKVRGPK and HIGMIAGGTGITPMLQIIKAIIRNRPRNGGNDTTQVDL.

Belongs to the flavoprotein pyridine nucleotide cytochrome reductase family. As to quaternary structure, monomer. Component of the 2-(3-amino-3-carboxypropyl)histidine synthase complex composed of dph1, dph2, dph3 and a NADH-dependent reductase, predominantly cbr1. The cofactor is FAD.

The protein resides in the mitochondrion outer membrane. The enzyme catalyses 2 Fe(III)-[cytochrome b5] + NADH = 2 Fe(II)-[cytochrome b5] + NAD(+) + H(+). The catalysed reaction is 2 Fe(3+)-[Dph3] + NADH = 2 Fe(2+)-[Dph3] + NAD(+) + H(+). The protein operates within protein modification; peptidyl-diphthamide biosynthesis. In terms of biological role, NADH-dependent reductase for dph3 and cytochrome b5. Required for the first step of diphthamide biosynthesis, a post-translational modification of histidine which occurs in elongation factor 2. Dph1 and dph2 transfer a 3-amino-3-carboxypropyl (ACP) group from S-adenosyl-L-methionine (SAM) to a histidine residue, the reaction is assisted by a reduction system comprising dph3 and a NADH-dependent reductase, predominantly cbr1. By reducing dph3, also involved in the formation of the tRNA wobble base modification mcm5s 2U (5-methoxycarbonylmethyl-2-thiouridine), mediated by the elongator complex. The cytochrome b5/NADH cytochrome b5 reductase electron transfer system supports the catalytic activity of several sterol biosynthetic enzymes. This is NADH-cytochrome b5 reductase 1 (cbr1) from Emericella nidulans (strain FGSC A4 / ATCC 38163 / CBS 112.46 / NRRL 194 / M139) (Aspergillus nidulans).